We begin with the raw amino-acid sequence, 266 residues long: MRLIPLRNTAEVGKWAARHIVNRINAFKPTAERPFILGLPTGGTPMEAYKHLIAMHKAGEVSFKHVVTFNMDEYVGLPKEHPESYYTFMHTNFFDHVDIPAENINLLNGNAADIDAECRRYEEKIKSYGKIHLFMGGVGVDGHIAFNEPASSLASRTRIKTLTQETRIANSRFFGGDANLVPKYALTVGVGTLLDAEEVMILVTGHGKAQALQAAVEGSINHMWTISCLQLHAKAIMVCDEPSTMELKVKTVKYFRELEAENVKDL.

The active-site Proton acceptor; for enolization step is the Asp-72. The active-site For ring-opening step is the Asp-141. His-143 functions as the Proton acceptor; for ring-opening step in the catalytic mechanism. Catalysis depends on Glu-148, which acts as the For ring-opening step.

The protein belongs to the glucosamine/galactosamine-6-phosphate isomerase family. NagB subfamily. As to quaternary structure, homohexamer.

It carries out the reaction alpha-D-glucosamine 6-phosphate + H2O = beta-D-fructose 6-phosphate + NH4(+). The protein operates within amino-sugar metabolism; N-acetylneuraminate degradation; D-fructose 6-phosphate from N-acetylneuraminate: step 5/5. Allosterically activated by N-acetylglucosamine 6-phosphate (GlcNAc6P). In terms of biological role, catalyzes the reversible isomerization-deamination of glucosamine 6-phosphate (GlcN6P) to form fructose 6-phosphate (Fru6P) and ammonium ion. This chain is Glucosamine-6-phosphate deaminase, found in Yersinia pseudotuberculosis serotype O:1b (strain IP 31758).